Consider the following 239-residue polypeptide: 3-dehydroquinate dehydratase (239 aa).

Residues 35–37 (ELR) and R70 contribute to the 3-dehydroquinate site. The Proton donor/acceptor role is filled by H133. The active-site Schiff-base intermediate with substrate is the K160. 3-dehydroquinate-binding residues include R202 and Q225.

This sequence belongs to the type-I 3-dehydroquinase family. As to quaternary structure, homodimer.

It carries out the reaction 3-dehydroquinate = 3-dehydroshikimate + H2O. Its pathway is metabolic intermediate biosynthesis; chorismate biosynthesis; chorismate from D-erythrose 4-phosphate and phosphoenolpyruvate: step 3/7. In terms of biological role, involved in the third step of the chorismate pathway, which leads to the biosynthesis of aromatic amino acids. Catalyzes the cis-dehydration of 3-dehydroquinate (DHQ) and introduces the first double bond of the aromatic ring to yield 3-dehydroshikimate. This chain is 3-dehydroquinate dehydratase, found in Staphylococcus saprophyticus subsp. saprophyticus (strain ATCC 15305 / DSM 20229 / NCIMB 8711 / NCTC 7292 / S-41).